The primary structure comprises 305 residues: Putative beta-lactamase HcpD (305 aa).

Residues methionine 1–threonine 27 form the signal peptide. TPR repeat units follow at residues glycine 28 to valine 61, histidine 96 to valine 133, glycine 168 to alanine 205, and glycine 240 to glycine 277. Disulfide bonds link cysteine 55–cysteine 63, cysteine 91–cysteine 99, cysteine 127–cysteine 135, cysteine 163–cysteine 171, cysteine 199–cysteine 207, cysteine 235–cysteine 243, and cysteine 271–cysteine 279.

This sequence belongs to the hcp beta-lactamase family.

The protein localises to the secreted. The enzyme catalyses a beta-lactam + H2O = a substituted beta-amino acid. May hydrolyze 6-aminopenicillinic acid and 7-aminocephalosporanic acid (ACA) derivatives. Binds to penicillin. The sequence is that of Putative beta-lactamase HcpD (hcpD) from Helicobacter pylori (strain J99 / ATCC 700824) (Campylobacter pylori J99).